A 763-amino-acid polypeptide reads, in one-letter code: Xaa-Pro dipeptidyl-peptidase (763 aa).

Residues Ser-348, Asp-468, and His-498 each act as charge relay system in the active site.

Belongs to the peptidase S15 family. In terms of assembly, homodimer.

It is found in the cytoplasm. It carries out the reaction Hydrolyzes Xaa-Pro-|- bonds to release unblocked, N-terminal dipeptides from substrates including Ala-Pro-|-p-nitroanilide and (sequentially) Tyr-Pro-|-Phe-Pro-|-Gly-Pro-|-Ile.. In terms of biological role, removes N-terminal dipeptides sequentially from polypeptides having unsubstituted N-termini provided that the penultimate residue is proline. The polypeptide is Xaa-Pro dipeptidyl-peptidase (Lactococcus lactis subsp. cremoris (strain SK11)).